Consider the following 518-residue polypeptide: MDKNFRVNTNDERNIWLSTAVNENLTMASSSSQPQPISSPFHQPENQVNRVNPGSHYYDLETLESSFGGLSFNDSSVGQNGDSIHLPRRTNQVFTGSSSGGAGDDNGYLLPPMGSHHHRELEELQRHNYLNQLRMSYQNDYAHQSYWYNTDGDGNGMLNNGFLNDVPSSSRDRVSDYYTNRFGYEGYNYWRGNEGFDYNQCQASFSAFAKDKEMSERLGMSIFQGTKETVDAIYNGLIGDICELMVDPYGSDVVQLLMRRCSSEQIVQLVDIVTQQMFQFVNICIDSLGTNAIQVLLTCINERAKDQIPRIVDVVRTVALQLSKSNHAIFVILACFRLFPLHCRLLLELIVQNCHQIAIDQHGCCLLQLCFNKDRVPNLEIRQRLIMEAIANALRLCLNCYGNYVVQYIVELNNRYLIDALVRQLIGNYAHLARNKYGSHAVQKLLKLRWIDSRVIVIDLLREIDTLLLDPFGNYVIQTAWFVSKDDVRRMLRYHIERNIPMMRCNKFGNKVLEKLNI.

2 disordered regions span residues 26 to 46 and 77 to 114; these read TMASSSSQPQPISSPFHQPEN and VGQNGDSIHLPRRTNQVFTGSSSGGAGDDNGYLLPPMG. The span at 29-44 shows a compositional bias: low complexity; the sequence is SSSSQPQPISSPFHQP. A PUM-HD domain is found at 178–518; sequence YTNRFGYEGY…GNKVLEKLNI (341 aa). Residues 206-235 form a Pumilio 1; degenerate repeat; sequence SAFAKDKEMSERLGMSIFQGTKETVDAIYN. Pumilio repeat units lie at residues 236-271, 275-313, 314-348, 349-387, 388-423, 424-459, and 460-494; these read GLIGDICELMVDPYGSDVVQLLMRRCSSEQIVQLVD, QQMFQFVNICIDSLGTNAIQVLLTCINERAKDQIPRIVD, VVRTVALQLSKSNHAIFVILACFRLFPLHCRLLLE, LIVQNCHQIAIDQHGCCLLQLCFNKDRVPNLEIRQRLIM, EAIANALRLCLNCYGNYVVQYIVELNNRYLIDALVR, QLIGNYAHLARNKYGSHAVQKLLKLRWIDSRVIVID, and LLREIDTLLLDPFGNYVIQTAWFVSKDDVRRMLRY.

It is found in the cytoplasm. The protein resides in the nucleus. In terms of biological role, sequence-specific RNA-binding protein that regulates translation and mRNA stability by binding the 3'-UTR of target mRNAs. The protein is Pumilio homolog 14 (APUM14) of Arabidopsis thaliana (Mouse-ear cress).